A 30-amino-acid polypeptide reads, in one-letter code: Cyclotide hyen-D (30 aa).

Positions 1–30 (GFPCGESCVYIPCFTAAIGCSCKSKVCYKN) form a cross-link, cyclopeptide (Gly-Asn). 3 cysteine pairs are disulfide-bonded: Cys-4–Cys-20, Cys-8–Cys-22, and Cys-13–Cys-27.

This is a cyclic peptide. In terms of tissue distribution, detected in stems (at protein level).

Probably participates in a plant defense mechanism. Has strong cytotoxic activity against HUVEC cells (LC(50)= 0.58 uM) and various cancer cells including HeLa (LC(50)= 0.48 uM), MCF-7 and K562. Also displays some hemolytic activity. Binds to and induces leakage in phospholipd membranes, particularly ones containing 1-palmitoyl-2-oleophosphatidylethanolamine (POPE). This Pigea enneasperma (Spade flower) protein is Cyclotide hyen-D.